The sequence spans 124 residues: Large ribosomal subunit protein bL12 (124 aa).

Belongs to the bacterial ribosomal protein bL12 family. Homodimer. Part of the ribosomal stalk of the 50S ribosomal subunit. Forms a multimeric L10(L12)X complex, where L10 forms an elongated spine to which 2 to 4 L12 dimers bind in a sequential fashion. Binds GTP-bound translation factors.

Its function is as follows. Forms part of the ribosomal stalk which helps the ribosome interact with GTP-bound translation factors. Is thus essential for accurate translation. The sequence is that of Large ribosomal subunit protein bL12 from Rickettsia akari (strain Hartford).